We begin with the raw amino-acid sequence, 284 residues long: Acetyl-coenzyme A carboxylase carboxyl transferase subunit beta (284 aa).

One can recognise a CoA carboxyltransferase N-terminal domain in the interval 25-284 (LWVKCPETGA…LCKILTKSVQ (260 aa)).

The protein belongs to the AccD/PCCB family. In terms of assembly, acetyl-CoA carboxylase is a heterohexamer composed of biotin carboxyl carrier protein (AccB), biotin carboxylase (AccC) and two subunits each of ACCase subunit alpha (AccA) and ACCase subunit beta (AccD).

The protein resides in the cytoplasm. It catalyses the reaction N(6)-carboxybiotinyl-L-lysyl-[protein] + acetyl-CoA = N(6)-biotinyl-L-lysyl-[protein] + malonyl-CoA. Its pathway is lipid metabolism; malonyl-CoA biosynthesis; malonyl-CoA from acetyl-CoA: step 1/1. Component of the acetyl coenzyme A carboxylase (ACC) complex. Biotin carboxylase (BC) catalyzes the carboxylation of biotin on its carrier protein (BCCP) and then the CO(2) group is transferred by the transcarboxylase to acetyl-CoA to form malonyl-CoA. The chain is Acetyl-coenzyme A carboxylase carboxyl transferase subunit beta from Liberibacter asiaticus (strain psy62).